Here is a 714-residue protein sequence, read N- to C-terminus: Fatty acid oxidation complex subunit alpha (714 aa).

Residues 1–190 (MEMTSAFTLN…KLGLVDDVVP (190 aa)) are enoyl-CoA hydratase. Residues 306–714 (APLNSVGILG…FWKTTATDLQ (409 aa)) are 3-hydroxyacyl-CoA dehydrogenase.

The protein in the N-terminal section; belongs to the enoyl-CoA hydratase/isomerase family. It in the central section; belongs to the 3-hydroxyacyl-CoA dehydrogenase family. As to quaternary structure, heterotetramer of two alpha chains (FadJ) and two beta chains (FadI).

It is found in the cytoplasm. It catalyses the reaction a (3S)-3-hydroxyacyl-CoA = a (2E)-enoyl-CoA + H2O. The catalysed reaction is a 4-saturated-(3S)-3-hydroxyacyl-CoA = a (3E)-enoyl-CoA + H2O. It carries out the reaction a (3S)-3-hydroxyacyl-CoA + NAD(+) = a 3-oxoacyl-CoA + NADH + H(+). The enzyme catalyses (3S)-3-hydroxybutanoyl-CoA = (3R)-3-hydroxybutanoyl-CoA. Its pathway is lipid metabolism; fatty acid beta-oxidation. Functionally, catalyzes the formation of a hydroxyacyl-CoA by addition of water on enoyl-CoA. Also exhibits 3-hydroxyacyl-CoA epimerase and 3-hydroxyacyl-CoA dehydrogenase activities. Strongly involved in the anaerobic degradation of long and medium-chain fatty acids in the presence of nitrate and weakly involved in the aerobic degradation of long-chain fatty acids. This chain is Fatty acid oxidation complex subunit alpha (fadJ), found in Escherichia coli (strain K12).